Here is a 92-residue protein sequence, read N- to C-terminus: Large ribosomal subunit protein eL37 (92 aa).

Positions 19, 22, 34, and 37 each coordinate Zn(2+). The C4-type zinc finger occupies 19–37; the sequence is CRRCGRRSYHIQKSTCANC. The tract at residues 50–92 is disordered; the sequence is SEKAKRRKTTGSGRTAHLRDVHRRFKNGFQVGTPKGARGPENH.

The protein belongs to the eukaryotic ribosomal protein eL37 family. Requires Zn(2+) as cofactor.

Its function is as follows. Binds to the 23S rRNA. The polypeptide is Large ribosomal subunit protein eL37 (rpl37) (Emericella nidulans (strain FGSC A4 / ATCC 38163 / CBS 112.46 / NRRL 194 / M139) (Aspergillus nidulans)).